The sequence spans 689 residues: Glycine--tRNA ligase beta subunit (689 aa).

It belongs to the class-II aminoacyl-tRNA synthetase family. In terms of assembly, tetramer of two alpha and two beta subunits.

It localises to the cytoplasm. It catalyses the reaction tRNA(Gly) + glycine + ATP = glycyl-tRNA(Gly) + AMP + diphosphate. In Actinobacillus pleuropneumoniae serotype 5b (strain L20), this protein is Glycine--tRNA ligase beta subunit.